Consider the following 185-residue polypeptide: Ribosome-recycling factor (185 aa).

This sequence belongs to the RRF family.

The protein resides in the cytoplasm. Functionally, responsible for the release of ribosomes from messenger RNA at the termination of protein biosynthesis. May increase the efficiency of translation by recycling ribosomes from one round of translation to another. The polypeptide is Ribosome-recycling factor (Dehalococcoides mccartyi (strain CBDB1)).